A 205-amino-acid polypeptide reads, in one-letter code: Methylthioribulose-1-phosphate dehydratase (205 aa).

Cys-75 is a substrate binding site. His-93 and His-95 together coordinate Zn(2+). Glu-116 serves as the catalytic Proton donor/acceptor. His-171 is a binding site for Zn(2+).

It belongs to the aldolase class II family. MtnB subfamily. Zn(2+) is required as a cofactor.

It is found in the cytoplasm. It carries out the reaction 5-(methylsulfanyl)-D-ribulose 1-phosphate = 5-methylsulfanyl-2,3-dioxopentyl phosphate + H2O. It functions in the pathway amino-acid biosynthesis; L-methionine biosynthesis via salvage pathway; L-methionine from S-methyl-5-thio-alpha-D-ribose 1-phosphate: step 2/6. Catalyzes the dehydration of methylthioribulose-1-phosphate (MTRu-1-P) into 2,3-diketo-5-methylthiopentyl-1-phosphate (DK-MTP-1-P). This chain is Methylthioribulose-1-phosphate dehydratase, found in Kluyveromyces lactis (strain ATCC 8585 / CBS 2359 / DSM 70799 / NBRC 1267 / NRRL Y-1140 / WM37) (Yeast).